A 102-amino-acid chain; its full sequence is Acid shock protein (102 aa).

Positions 1-21 (MKKVLALVVAAAMGLSSAAFA) are cleaved as a signal peptide. Low complexity predominate over residues 21-41 (AAETTTTPAPTATTTKAAPAK). Residues 21-102 (AAETTTTPAP…PAKPAAQPAA (82 aa)) form a disordered region. Residues 22–58 (AETTTTPAPTATTTKAAPAKTTHHKKQHKAAPAQKAQ) constitute a propeptide that is removed on maturation. Residues 80–90 (AAKKHAKKHSH) show a composition bias toward basic residues. The span at 91–102 (QQPAKPAAQPAA) shows a compositional bias: low complexity.

The protein belongs to the Asr family. Proteolytic processing gives rise to the active protein.

Its subcellular location is the periplasm. In terms of biological role, required for growth and/or survival at acidic conditions. In Escherichia coli (strain K12 / MC4100 / BW2952), this protein is Acid shock protein.